A 117-amino-acid chain; its full sequence is Large ribosomal subunit protein uL18 (117 aa).

Belongs to the universal ribosomal protein uL18 family. In terms of assembly, part of the 50S ribosomal subunit; part of the 5S rRNA/L5/L18/L25 subcomplex. Contacts the 5S and 23S rRNAs.

Functionally, this is one of the proteins that bind and probably mediate the attachment of the 5S RNA into the large ribosomal subunit, where it forms part of the central protuberance. The polypeptide is Large ribosomal subunit protein uL18 (Hydrogenovibrio crunogenus (strain DSM 25203 / XCL-2) (Thiomicrospira crunogena)).